Reading from the N-terminus, the 543-residue chain is Hydroxylamine reductase (543 aa).

[4Fe-4S] cluster is bound by residues Cys-3, Cys-6, Cys-15, and Cys-21. Hybrid [4Fe-2O-2S] cluster-binding residues include His-244, Glu-268, Cys-312, Cys-399, Cys-427, Cys-452, Glu-486, and Lys-488. At Cys-399 the chain carries Cysteine persulfide.

The protein belongs to the HCP family. The cofactor is [4Fe-4S] cluster. Requires hybrid [4Fe-2O-2S] cluster as cofactor.

It is found in the cytoplasm. It carries out the reaction A + NH4(+) + H2O = hydroxylamine + AH2 + H(+). Catalyzes the reduction of hydroxylamine to form NH(3) and H(2)O. The polypeptide is Hydroxylamine reductase (Methanocella arvoryzae (strain DSM 22066 / NBRC 105507 / MRE50)).